Here is a 238-residue protein sequence, read N- to C-terminus: Ribosomal RNA small subunit methyltransferase G (238 aa).

Residues Gly99, Leu104, 122-124 (DAT), 150-151 (VE), and Arg164 each bind S-adenosyl-L-methionine.

This sequence belongs to the methyltransferase superfamily. RNA methyltransferase RsmG family.

It is found in the cytoplasm. Functionally, specifically methylates the N7 position of a guanine in 16S rRNA. This is Ribosomal RNA small subunit methyltransferase G from Chlorobium luteolum (strain DSM 273 / BCRC 81028 / 2530) (Pelodictyon luteolum).